Consider the following 463-residue polypeptide: Sialic acid-binding Ig-like lectin 9 (463 aa).

The first 17 residues, 1 to 17 (MLLLLLPLLWGRERAEG), serve as a signal peptide directing secretion. Topologically, residues 18-348 (QTSKLLTMQS…SKATSGVTQG (331 aa)) are extracellular. Residues 20-140 (SKLLTMQSSV…KHHRLSVNVT (121 aa)) form the Ig-like V-type domain. 3 cysteine pairs are disulfide-bonded: cysteine 36-cysteine 170, cysteine 41-cysteine 102, and cysteine 164-cysteine 213. An N-linked (GlcNAc...) asparagine glycan is attached at asparagine 101. Arginine 120 is a binding site for N-acetylneuraminate. 2 N-linked (GlcNAc...) asparagine glycosylation sites follow: asparagine 138 and asparagine 161. One can recognise an Ig-like C2-type 1 domain in the interval 146 to 229 (PNILIPGTLE…ASVTTNKTVH (84 aa)). Residues asparagine 225, asparagine 231, asparagine 238, and asparagine 256 are each glycosylated (N-linked (GlcNAc...) asparagine). In terms of domain architecture, Ig-like C2-type 2 spans 236 to 336 (PQNLTMTVFQ…GSQQVYLNVS (101 aa)). Cysteine 272 and cysteine 320 are joined by a disulfide. An N-linked (GlcNAc...) asparagine glycan is attached at asparagine 334. Residues 349–369 (VVGGAGATALVFLSFCVIFVV) form a helical membrane-spanning segment. Topologically, residues 370-463 (VRSCRKKSAR…TEYSEIKIHR (94 aa)) are cytoplasmic. Residues 380–428 (PAAGVGDTGIEDANAVRGSASQGPLTEPWAEDSPPDQPPPASARSSVGE) form a disordered region. The short motif at 431-436 (LQYASL) is the ITIM motif element. Residues 444 to 463 (WDSRGQEATDTEYSEIKIHR) are disordered. An SLAM-like motif motif is present at residues 454–459 (TEYSEI).

It belongs to the immunoglobulin superfamily. SIGLEC (sialic acid binding Ig-like lectin) family. In terms of tissue distribution, expressed by peripheral blood leukocytes (neutrophils and monocytes but not eosinophils). Found in liver, fetal liver, bone marrow, placenta, spleen and in lower levels in skeletal muscle, fetal brain, stomach, lung, thymus, prostate, brain, mammary, adrenal gland, colon, trachea, cerebellum, testis, small intestine and spinal cordon.

It localises to the membrane. In terms of biological role, putative adhesion molecule that mediates sialic-acid dependent binding to cells. Preferentially binds to alpha-2,3- or alpha-2,6-linked sialic acid. The sialic acid recognition site may be masked by cis interactions with sialic acids on the same cell surface. This Homo sapiens (Human) protein is Sialic acid-binding Ig-like lectin 9 (SIGLEC9).